Here is a 319-residue protein sequence, read N- to C-terminus: tRNA pseudouridine synthase B (319 aa).

Residue Asp49 is the Nucleophile of the active site.

It belongs to the pseudouridine synthase TruB family. Type 1 subfamily.

The catalysed reaction is uridine(55) in tRNA = pseudouridine(55) in tRNA. In terms of biological role, responsible for synthesis of pseudouridine from uracil-55 in the psi GC loop of transfer RNAs. The chain is tRNA pseudouridine synthase B from Bartonella henselae (strain ATCC 49882 / DSM 28221 / CCUG 30454 / Houston 1) (Rochalimaea henselae).